A 213-amino-acid polypeptide reads, in one-letter code: Thiamine-phosphate synthase (213 aa).

4-amino-2-methyl-5-(diphosphooxymethyl)pyrimidine-binding positions include 39 to 43 (QYRDK) and aspartate 71. Mg(2+)-binding residues include aspartate 72 and aspartate 91. Serine 108 contacts 4-amino-2-methyl-5-(diphosphooxymethyl)pyrimidine. 135–137 (TDT) lines the 2-[(2R,5Z)-2-carboxy-4-methylthiazol-5(2H)-ylidene]ethyl phosphate pocket. Residue lysine 138 coordinates 4-amino-2-methyl-5-(diphosphooxymethyl)pyrimidine. 2-[(2R,5Z)-2-carboxy-4-methylthiazol-5(2H)-ylidene]ethyl phosphate contacts are provided by residues glycine 165 and 185 to 186 (VS).

Belongs to the thiamine-phosphate synthase family. Mg(2+) serves as cofactor.

The catalysed reaction is 2-[(2R,5Z)-2-carboxy-4-methylthiazol-5(2H)-ylidene]ethyl phosphate + 4-amino-2-methyl-5-(diphosphooxymethyl)pyrimidine + 2 H(+) = thiamine phosphate + CO2 + diphosphate. It catalyses the reaction 2-(2-carboxy-4-methylthiazol-5-yl)ethyl phosphate + 4-amino-2-methyl-5-(diphosphooxymethyl)pyrimidine + 2 H(+) = thiamine phosphate + CO2 + diphosphate. It carries out the reaction 4-methyl-5-(2-phosphooxyethyl)-thiazole + 4-amino-2-methyl-5-(diphosphooxymethyl)pyrimidine + H(+) = thiamine phosphate + diphosphate. The protein operates within cofactor biosynthesis; thiamine diphosphate biosynthesis; thiamine phosphate from 4-amino-2-methyl-5-diphosphomethylpyrimidine and 4-methyl-5-(2-phosphoethyl)-thiazole: step 1/1. In terms of biological role, condenses 4-methyl-5-(beta-hydroxyethyl)thiazole monophosphate (THZ-P) and 2-methyl-4-amino-5-hydroxymethyl pyrimidine pyrophosphate (HMP-PP) to form thiamine monophosphate (TMP). This chain is Thiamine-phosphate synthase, found in Thermoplasma acidophilum (strain ATCC 25905 / DSM 1728 / JCM 9062 / NBRC 15155 / AMRC-C165).